A 222-amino-acid polypeptide reads, in one-letter code: MSHLVKMENGQSQTIQEMLGCIERYNPDHLKTLEAYVQDQAKNNTYDLEANLAVLKLYQFNPHMLNFDITYTILLKSLTSLPHTDFVMAKCLLLPQQMKDENVQTIIDLADILERADFTLFWQRAEVNRSMFRHIAGFHDSIRKFVSHVVGTTFQTIRKDLLKELLGGIEDSTLESWIKRNGWKHQGQGLVVVAMQDDKIKTKNITEKIEFDNVGGLMAQCL.

In terms of domain architecture, PCI spans 46-208; the sequence is YDLEANLAVL…KIKTKNITEK (163 aa).

This sequence belongs to the eIF-3 subunit K family. As to quaternary structure, component of the eukaryotic translation initiation factor 3 (eIF-3) complex. The eIF-3 complex interacts with pix.

The protein resides in the cytoplasm. Functionally, component of the eukaryotic translation initiation factor 3 (eIF-3) complex, which is involved in protein synthesis of a specialized repertoire of mRNAs and, together with other initiation factors, stimulates binding of mRNA and methionyl-tRNAi to the 40S ribosome. The eIF-3 complex specifically targets and initiates translation of a subset of mRNAs involved in cell proliferation. The chain is Eukaryotic translation initiation factor 3 subunit K from Drosophila yakuba (Fruit fly).